Reading from the N-terminus, the 448-residue chain is Glucose-6-phosphate isomerase (448 aa).

The active-site Proton donor is the Glu-288. Active-site residues include His-309 and Lys-423.

It belongs to the GPI family.

The protein resides in the cytoplasm. It carries out the reaction alpha-D-glucose 6-phosphate = beta-D-fructose 6-phosphate. It functions in the pathway carbohydrate biosynthesis; gluconeogenesis. It participates in carbohydrate degradation; glycolysis; D-glyceraldehyde 3-phosphate and glycerone phosphate from D-glucose: step 2/4. Its function is as follows. Catalyzes the reversible isomerization of glucose-6-phosphate to fructose-6-phosphate. This chain is Glucose-6-phosphate isomerase, found in Fusobacterium nucleatum subsp. nucleatum (strain ATCC 25586 / DSM 15643 / BCRC 10681 / CIP 101130 / JCM 8532 / KCTC 2640 / LMG 13131 / VPI 4355).